The primary structure comprises 212 residues: Peptide methionine sulfoxide reductase MsrA (212 aa).

Residue C52 is part of the active site.

This sequence belongs to the MsrA Met sulfoxide reductase family.

The catalysed reaction is L-methionyl-[protein] + [thioredoxin]-disulfide + H2O = L-methionyl-(S)-S-oxide-[protein] + [thioredoxin]-dithiol. The enzyme catalyses [thioredoxin]-disulfide + L-methionine + H2O = L-methionine (S)-S-oxide + [thioredoxin]-dithiol. Has an important function as a repair enzyme for proteins that have been inactivated by oxidation. Catalyzes the reversible oxidation-reduction of methionine sulfoxide in proteins to methionine. The polypeptide is Peptide methionine sulfoxide reductase MsrA (Escherichia coli O127:H6 (strain E2348/69 / EPEC)).